The primary structure comprises 469 residues: Argininosuccinate lyase (469 aa).

This sequence belongs to the lyase 1 family. Argininosuccinate lyase subfamily.

It localises to the cytoplasm. It catalyses the reaction 2-(N(omega)-L-arginino)succinate = fumarate + L-arginine. It participates in amino-acid biosynthesis; L-arginine biosynthesis; L-arginine from L-ornithine and carbamoyl phosphate: step 3/3. This is Argininosuccinate lyase from Polaromonas naphthalenivorans (strain CJ2).